The chain runs to 229 residues: Uracil-DNA glycosylase (229 aa).

The Proton acceptor role is filled by aspartate 64.

This sequence belongs to the uracil-DNA glycosylase (UDG) superfamily. UNG family.

The protein localises to the cytoplasm. It catalyses the reaction Hydrolyzes single-stranded DNA or mismatched double-stranded DNA and polynucleotides, releasing free uracil.. Functionally, excises uracil residues from the DNA which can arise as a result of misincorporation of dUMP residues by DNA polymerase or due to deamination of cytosine. In Klebsiella pneumoniae (strain 342), this protein is Uracil-DNA glycosylase.